The sequence spans 116 residues: Large ribosomal subunit protein bL19 (116 aa).

This sequence belongs to the bacterial ribosomal protein bL19 family.

Its function is as follows. This protein is located at the 30S-50S ribosomal subunit interface and may play a role in the structure and function of the aminoacyl-tRNA binding site. This chain is Large ribosomal subunit protein bL19, found in Staphylococcus haemolyticus (strain JCSC1435).